Consider the following 563-residue polypeptide: Adenine deaminase (563 aa).

It belongs to the metallo-dependent hydrolases superfamily. Adenine deaminase family. Mn(2+) is required as a cofactor.

It catalyses the reaction adenine + H2O + H(+) = hypoxanthine + NH4(+). This is Adenine deaminase from Lactiplantibacillus plantarum (strain ATCC BAA-793 / NCIMB 8826 / WCFS1) (Lactobacillus plantarum).